A 229-amino-acid polypeptide reads, in one-letter code: Ribonuclease 3 (229 aa).

Residues Ile-7–Gly-132 form the RNase III domain. Glu-45 provides a ligand contact to Mg(2+). Residue Asp-49 is part of the active site. Residues Asp-118 and Glu-121 each contribute to the Mg(2+) site. Glu-121 is a catalytic residue. Residues Asp-157–Ser-226 enclose the DRBM domain.

This sequence belongs to the ribonuclease III family. As to quaternary structure, homodimer. It depends on Mg(2+) as a cofactor.

It is found in the cytoplasm. The catalysed reaction is Endonucleolytic cleavage to 5'-phosphomonoester.. In terms of biological role, digests double-stranded RNA. Involved in the processing of primary rRNA transcript to yield the immediate precursors to the large and small rRNAs (23S and 16S). Processes some mRNAs, and tRNAs when they are encoded in the rRNA operon. Processes pre-crRNA and tracrRNA of type II CRISPR loci if present in the organism. This Dinoroseobacter shibae (strain DSM 16493 / NCIMB 14021 / DFL 12) protein is Ribonuclease 3.